We begin with the raw amino-acid sequence, 266 residues long: Tryptophan synthase alpha chain (266 aa).

Residues Glu-52 and Asp-63 each act as proton acceptor in the active site.

This sequence belongs to the TrpA family. As to quaternary structure, tetramer of two alpha and two beta chains.

The catalysed reaction is (1S,2R)-1-C-(indol-3-yl)glycerol 3-phosphate + L-serine = D-glyceraldehyde 3-phosphate + L-tryptophan + H2O. The protein operates within amino-acid biosynthesis; L-tryptophan biosynthesis; L-tryptophan from chorismate: step 5/5. The alpha subunit is responsible for the aldol cleavage of indoleglycerol phosphate to indole and glyceraldehyde 3-phosphate. In Nocardia farcinica (strain IFM 10152), this protein is Tryptophan synthase alpha chain.